We begin with the raw amino-acid sequence, 350 residues long: Deoxyribonuclease-2-alpha (350 aa).

Positions Met-1–Ala-19 are cleaved as a signal peptide. An intrachain disulfide couples Cys-22 to Cys-162. 4 N-linked (GlcNAc...) asparagine glycosylation sites follow: Asn-89, Asn-215, Asn-269, and Asn-293. Disulfide bonds link Cys-270–Cys-350 and Cys-311–Cys-330. The active site involves His-298.

It belongs to the DNase II family. In terms of tissue distribution, ubiquitous.

The protein localises to the lysosome. It catalyses the reaction Endonucleolytic cleavage to nucleoside 3'-phosphates and 3'-phosphooligonucleotide end-products.. Functionally, hydrolyzes DNA under acidic conditions with a preference for double-stranded DNA. Plays a major role in the clearance of nucleic acids generated through apoptosis, hence preventing autoinflammation. Necessary for proper fetal development and for definitive erythropoiesis in fetal liver and bone marrow, where it degrades nuclear DNA expelled from erythroid precursor cells. The protein is Deoxyribonuclease-2-alpha (Dnase2) of Rattus norvegicus (Rat).